The primary structure comprises 416 residues: Phosphoribosylamine--glycine ligase (416 aa).

The 197-residue stretch at 107–303 (KDVMACAGVP…LAGLLMAAAT (197 aa)) folds into the ATP-grasp domain. ATP is bound at residue 133 to 184 (LAAFGAPYVVKDDGLAAGKGVVVTDDVEAARAHANACDRVVVEEFLDGPEVS). Residues Glu-273 and Asn-275 each coordinate Mg(2+).

This sequence belongs to the GARS family. Mg(2+) serves as cofactor. Mn(2+) is required as a cofactor.

The enzyme catalyses 5-phospho-beta-D-ribosylamine + glycine + ATP = N(1)-(5-phospho-beta-D-ribosyl)glycinamide + ADP + phosphate + H(+). It functions in the pathway purine metabolism; IMP biosynthesis via de novo pathway; N(1)-(5-phospho-D-ribosyl)glycinamide from 5-phospho-alpha-D-ribose 1-diphosphate: step 2/2. This Streptomyces coelicolor (strain ATCC BAA-471 / A3(2) / M145) protein is Phosphoribosylamine--glycine ligase.